A 428-amino-acid polypeptide reads, in one-letter code: L-rhamnose isomerase (428 aa).

Mn(2+)-binding residues include His260, Asp292, and Asp294.

The protein belongs to the rhamnose isomerase family. It depends on Mn(2+) as a cofactor.

Its subcellular location is the cytoplasm. It catalyses the reaction L-rhamnopyranose = L-rhamnulose. The protein operates within carbohydrate degradation; L-rhamnose degradation; glycerone phosphate from L-rhamnose: step 1/3. In terms of biological role, catalyzes the interconversion of L-rhamnose and L-rhamnulose. The polypeptide is L-rhamnose isomerase (Enterococcus faecalis (strain ATCC 700802 / V583)).